The following is a 484-amino-acid chain: Keratin, type I cytoskeletal 14 (484 aa).

A disordered region spans residues 1-20 (MATCSRQFTSSSSMKGSCGI). The head stretch occupies residues 1 to 120 (MATCSRQFTS…GIGDGLLVGS (120 aa)). The segment at 121-156 (EKVTMQNLNDRLATYLDKVRALEEANTELEVKIRDW) is coil 1A. One can recognise an IF rod domain in the interval 121-432 (EKVTMQNLND…RLLEGEDAHL (312 aa)). The interval 157-174 (YQRQRPTEIKDYSPYFKT) is linker 1. The coil 1B stretch occupies residues 175–266 (IEDLKSKILA…KNHEEEMASM (92 aa)). The tract at residues 267–289 (RGQVGGDVNVEMDAAPGVDLSRI) is linker 12. The coil 2 stretch occupies residues 290 to 428 (LNEMRDQYEK…ATYRRLLEGE (139 aa)). A tail region spans residues 429–484 (DAHLSSSQFSSSSQFSSGSQSSRDVTSTNRQIRTKVMDVHDGKVVSTHEQVLRTKN). The segment at 431 to 484 (HLSSSQFSSSSQFSSGSQSSRDVTSTNRQIRTKVMDVHDGKVVSTHEQVLRTKN) is interaction with Type I keratins and keratin filaments. Over residues 435-450 (SQFSSSSQFSSGSQSS) the composition is skewed to low complexity. The disordered stretch occupies residues 435 to 457 (SQFSSSSQFSSGSQSSRDVTSTN). Phosphoserine is present on Ser-447.

Belongs to the intermediate filament family. Heterotetramer of two type I and two type II keratins. Forms a disulfide-linked heterodimer (via 2B domains) with KRT5 (via 2B domains). Forms a heterodimer with KRT1; the interaction is more abundant in the absence of KRT5. Interacts with PLEC isoform 1C, when in a heterodimer with KRT5. Interacts with TRADD and with keratin filaments. Associates with other type I keratins. Interacts with EPPK1. Interacts with KLHL24. Interacts with PKP1 (via N-terminus) and PKP2. In terms of processing, a disulfide bond is formed between rather than within filaments and promotes the formation of a keratin filament cage around the nucleus. Ubiquitinated by the BCR(KLHL24) E3 ubiquitin ligase complex. As to expression, expressed in the corneal epithelium (at protein level). Expressed in the basal layer of the epidermis and the outer root sheath of hair follicles (at protein level). Expressed in the epithelial basal layer in the tail epidermis. Expressed in the parabasal cell row, basal cell layer, and suprabasal epithelial layer of the tongue.

It localises to the cytoplasm. It is found in the nucleus. The nonhelical tail domain is involved in promoting KRT5-KRT14 filaments to self-organize into large bundles and enhances the mechanical properties involved in resilience of keratin intermediate filaments in vitro. The protein is Keratin, type I cytoskeletal 14 (Krt14) of Mus musculus (Mouse).